We begin with the raw amino-acid sequence, 54 residues long: UPF0391 membrane protein Pnap_0920 (54 aa).

The next 2 helical transmembrane spans lie at 6–26 (VVFL…IAAG) and 30–50 (IAKI…VVSL).

It belongs to the UPF0391 family.

It localises to the cell membrane. The chain is UPF0391 membrane protein Pnap_0920 from Polaromonas naphthalenivorans (strain CJ2).